Here is a 71-residue protein sequence, read N- to C-terminus: MPIIKIRENEPFDVALRRFKRSCEKAGILSEVRRREFYEKPTTERKRAKASAIKRHAKKMARENLKKTKFY.

The protein belongs to the bacterial ribosomal protein bS21 family.

This is Small ribosomal subunit protein bS21 from Wigglesworthia glossinidia brevipalpis.